Here is a 540-residue protein sequence, read N- to C-terminus: Chaperonin GroEL (540 aa).

Residues 29–32, 86–90, glycine 413, 477–479, and aspartate 493 contribute to the ATP site; these read TLGP, DGTTT, and DAL.

Belongs to the chaperonin (HSP60) family. Forms a cylinder of 14 subunits composed of two heptameric rings stacked back-to-back. Interacts with the co-chaperonin GroES.

The protein localises to the cytoplasm. The catalysed reaction is ATP + H2O + a folded polypeptide = ADP + phosphate + an unfolded polypeptide.. Its function is as follows. Together with its co-chaperonin GroES, plays an essential role in assisting protein folding. The GroEL-GroES system forms a nano-cage that allows encapsulation of the non-native substrate proteins and provides a physical environment optimized to promote and accelerate protein folding. This Clostridium botulinum (strain Alaska E43 / Type E3) protein is Chaperonin GroEL.